We begin with the raw amino-acid sequence, 363 residues long: 3-dehydroquinate synthase (363 aa).

NAD(+) is bound by residues 75–80 (DAEEGK), 109–113 (GAVTD), 133–134 (TS), K146, K155, and 173–176 (TLQT). Zn(2+)-binding residues include E188, H251, and H267.

This sequence belongs to the sugar phosphate cyclases superfamily. Dehydroquinate synthase family. It depends on Co(2+) as a cofactor. The cofactor is Zn(2+). Requires NAD(+) as cofactor.

Its subcellular location is the cytoplasm. It carries out the reaction 7-phospho-2-dehydro-3-deoxy-D-arabino-heptonate = 3-dehydroquinate + phosphate. It functions in the pathway metabolic intermediate biosynthesis; chorismate biosynthesis; chorismate from D-erythrose 4-phosphate and phosphoenolpyruvate: step 2/7. Functionally, catalyzes the conversion of 3-deoxy-D-arabino-heptulosonate 7-phosphate (DAHP) to dehydroquinate (DHQ). The protein is 3-dehydroquinate synthase of Paenarthrobacter aurescens (strain TC1).